We begin with the raw amino-acid sequence, 296 residues long: Sulfotransferase 1C2 (296 aa).

49–54 provides a ligand contact to 3'-phosphoadenylyl sulfate; it reads KAGTTW. 107-109 is a binding site for substrate; it reads KTH. Catalysis depends on His-109, which acts as the Proton acceptor. 3'-phosphoadenylyl sulfate is bound by residues Arg-131, Ser-139, Tyr-194, and 228 to 233; that span reads TSFEKM. Ser-139 is modified (phosphoserine). Ser-254 carries the post-translational modification Phosphoserine. 256 to 260 is a 3'-phosphoadenylyl sulfate binding site; it reads FMRKG.

It belongs to the sulfotransferase 1 family. Found in adult stomach, kidney and thyroid gland, and in fetal kidney and liver.

The protein resides in the cytoplasm. The protein localises to the lysosome. It is found in the mitochondrion. It catalyses the reaction a phenol + 3'-phosphoadenylyl sulfate = an aryl sulfate + adenosine 3',5'-bisphosphate + H(+). The catalysed reaction is cholesterol + 3'-phosphoadenylyl sulfate = cholesterol sulfate + adenosine 3',5'-bisphosphate + H(+). Functionally, sulfotransferase that utilizes 3'-phospho-5'-adenylyl sulfate (PAPS) to catalyze the sulfate conjugation of phenolic compounds. Does not transfer sulfate to steroids, dopamine, acetaminophen, or alpha-naphthol. Except in mitochondria, where it can add sulfate to cholesterol producing cholesterol sulfate, which alters mitochondrial membrane organization, and impacts protein complex mobility increasing state-III respiration, thereby modulating mitochondrial respiration. Catalyzes the sulfation of the carcinogenic N-hydroxy-2-acetylaminofluorene leading to highly reactive intermediates capable of forming DNA adducts, potentially resulting in mutagenesis. This chain is Sulfotransferase 1C2 (SULT1C2), found in Homo sapiens (Human).